Here is a 407-residue protein sequence, read N- to C-terminus: Lymphocyte transmembrane adapter 1 (407 aa).

The interval methionine 1 to glycine 25 is disordered. The Extracellular segment spans residues methionine 1–glutamine 33. Positions glutamate 16–glycine 25 are enriched in polar residues. Residues isoleucine 34–isoleucine 54 form a helical; Signal-anchor for type III membrane protein membrane-spanning segment. Residues leucine 55–alanine 407 are Cytoplasmic-facing. The interval glutamate 109–glutamine 131 is disordered. Phosphotyrosine occurs at positions 185, 260, 286, and 353. The disordered stretch occupies residues serine 331 to leucine 388.

As to quaternary structure, when phosphorylated, interacts with GRB2, PIK3R1 and GRAP2. In terms of processing, phosphorylated on tyrosines upon TCR or BCR activation; which leads to the recruitment of GRB2, PIK3R1 and GRAP2. In terms of tissue distribution, expressed in T-cells and B-cells.

Its subcellular location is the cell membrane. Its function is as follows. Negatively regulates TCR (T-cell antigen receptor)-mediated signaling in T-cells and BCR (B-cell antigen receptor)-mediated signaling in B-cells. The polypeptide is Lymphocyte transmembrane adapter 1 (Lax1) (Mus musculus (Mouse)).